Here is a 197-residue protein sequence, read N- to C-terminus: MIARLAGKVAEKGADHVVLDVGGVGYLVHLSAVSLAGLPPQGGDGTLRIFTNVRQDAIELYGFASEDEEAVFRALIDVKGVGPRAAQNILSGIDARELAQAVAGSDVARLTKVPGIGKKTAERLVVELKEKLALLARAAGPARAKPGAGVVEQLRQALVNLGYKPPQADAAADALRDEAEGKKLDELLREALKRLRG.

The tract at residues Met1–Ala64 is domain I. Positions Ser65–Pro141 are domain II. The segment at Pro141–Lys145 is flexible linker. The tract at residues Pro146–Gly197 is domain III.

It belongs to the RuvA family. As to quaternary structure, homotetramer. Forms an RuvA(8)-RuvB(12)-Holliday junction (HJ) complex. HJ DNA is sandwiched between 2 RuvA tetramers; dsDNA enters through RuvA and exits via RuvB. An RuvB hexamer assembles on each DNA strand where it exits the tetramer. Each RuvB hexamer is contacted by two RuvA subunits (via domain III) on 2 adjacent RuvB subunits; this complex drives branch migration. In the full resolvosome a probable DNA-RuvA(4)-RuvB(12)-RuvC(2) complex forms which resolves the HJ.

The protein resides in the cytoplasm. Functionally, the RuvA-RuvB-RuvC complex processes Holliday junction (HJ) DNA during genetic recombination and DNA repair, while the RuvA-RuvB complex plays an important role in the rescue of blocked DNA replication forks via replication fork reversal (RFR). RuvA specifically binds to HJ cruciform DNA, conferring on it an open structure. The RuvB hexamer acts as an ATP-dependent pump, pulling dsDNA into and through the RuvAB complex. HJ branch migration allows RuvC to scan DNA until it finds its consensus sequence, where it cleaves and resolves the cruciform DNA. The chain is Holliday junction branch migration complex subunit RuvA from Anaeromyxobacter sp. (strain Fw109-5).